A 706-amino-acid chain; its full sequence is SPX domain-containing membrane protein OsI_32082 (706 aa).

The 144-residue stretch at 2–145 (VNFSNKLTKD…GYKFTDYYVR (144 aa)) folds into the SPX domain. The next 6 membrane-spanning stretches (helical) occupy residues 251–271 (MSLV…YIVV), 281–301 (LGAA…AQVF), 318–338 (LLFS…AFDL), 340–359 (SLTI…ARAV), 378–398 (AAFV…AGLL), and 414–434 (LPGW…WISF). Residues 475–498 (SEQDEEDDNGDEEHNETLSSSTTT) form a disordered region. Residues 476-488 (EQDEEDDNGDEEH) are compositionally biased toward acidic residues. A run of 5 helical transmembrane segments spans residues 520-540 (LLIY…SSVV), 554-574 (VFLA…GTYI), 583-603 (ILVA…KLTV), 611-631 (VCSA…NLSL), and 678-698 (LLNA…AATL).

This sequence belongs to the major facilitator superfamily.

It localises to the membrane. In Oryza sativa subsp. indica (Rice), this protein is SPX domain-containing membrane protein OsI_32082.